The chain runs to 287 residues: uncharacterized protein (287 aa).

An N-terminal signal peptide occupies residues 1-20 (MKVICGSVFLFSLFFQVVLG). Residues 22 to 201 (YFSSSSGNPN…AFYGPRRNIK (180 aa)) lie on the Extracellular side of the membrane. N-linked (GlcNAc...) asparagine glycosylation is found at Asn120, Asn154, and Asn166. The helical transmembrane segment at 202-222 (AAIAVPSVILGLILVALVYYA) threads the bilayer. Over 223–287 (YRKDTWKIYM…YYQSQVKKFH (65 aa)) the chain is Cytoplasmic.

Its subcellular location is the membrane. This is an uncharacterized protein from Schizosaccharomyces pombe (strain 972 / ATCC 24843) (Fission yeast).